The sequence spans 225 residues: MQIRWYGHAAFMVETGGAKLLIDPWITNPLSPASPQEVINAKPTHILITHDHFDHLGESVDIAKATGAPIVGSFELMLEVAEKGIPEAQTMPMNIGGTIKLGDGVEVYMTPALHTANRGAPSGFVVATPEGTVYHAGDTALFRDMELIGELYDIDVALLPIGSVYTMGPREAAIAVQLLRPRRVVPMHYNTFPLIRQDPEDFKARVEAVSRAKVFVMKPGDVLKL.

This sequence belongs to the UPF0173 family.

The chain is UPF0173 metal-dependent hydrolase Pars_0810 from Pyrobaculum arsenaticum (strain DSM 13514 / JCM 11321 / PZ6).